The chain runs to 164 residues: Nucleotide-binding protein Emin_0136 (164 aa).

It belongs to the YajQ family.

In terms of biological role, nucleotide-binding protein. The chain is Nucleotide-binding protein Emin_0136 from Elusimicrobium minutum (strain Pei191).